The sequence spans 213 residues: Endonuclease III (213 aa).

The HhH domain occupies 101–120 (LEELLKLPGVGRKTANIVLW). Cysteine 180, cysteine 187, cysteine 190, and cysteine 196 together coordinate [4Fe-4S] cluster.

This sequence belongs to the Nth/MutY family. Requires [4Fe-4S] cluster as cofactor.

The catalysed reaction is 2'-deoxyribonucleotide-(2'-deoxyribose 5'-phosphate)-2'-deoxyribonucleotide-DNA = a 3'-end 2'-deoxyribonucleotide-(2,3-dehydro-2,3-deoxyribose 5'-phosphate)-DNA + a 5'-end 5'-phospho-2'-deoxyribonucleoside-DNA + H(+). Functionally, DNA repair enzyme that has both DNA N-glycosylase activity and AP-lyase activity. The DNA N-glycosylase activity releases various damaged pyrimidines from DNA by cleaving the N-glycosidic bond, leaving an AP (apurinic/apyrimidinic) site. The AP-lyase activity cleaves the phosphodiester bond 3' to the AP site by a beta-elimination, leaving a 3'-terminal unsaturated sugar and a product with a terminal 5'-phosphate. The protein is Endonuclease III of Thermotoga maritima (strain ATCC 43589 / DSM 3109 / JCM 10099 / NBRC 100826 / MSB8).